The chain runs to 392 residues: THO complex subunit MFT1 (392 aa).

2 stretches are compositionally biased toward acidic residues: residues aspartate 258–glutamate 271 and asparagine 290–glycine 330. Residues aspartate 258–lysine 392 are disordered. Serine 266 carries the post-translational modification Phosphoserine. Residues glutamate 331–asparagine 344 show a composition bias toward polar residues. A compositionally biased stretch (acidic residues) spans glutamate 345–aspartate 367. Positions glycine 377 to lysine 392 are enriched in polar residues.

As to quaternary structure, component of the THO complex, which is composed of HPR1, MFT1, THO2 and THP2. Together with SUB2, TEX1 and YRA1, THO forms the transcription/export (TREX) complex. THO associates with DNA and RNA in vitro.

The protein resides in the nucleus. In terms of biological role, component the THO subcomplex of the TREX complex, which operates in coupling transcription elongation to mRNA export. The THO complex is recruited to transcribed genes and moves along the gene with the elongating polymerase during transcription. THO is important for stabilizing nascent RNA in the RNA polymerase II elongation complex by preventing formation of DNA:RNA hybrids behind the elongating polymerase. It functions in cotranscriptional formation of an export-competent messenger ribonucleoprotein particle (mRNP) by facilitating the loading of ATP-dependent RNA helicase SUB2 and the mRNA export factor YRA1 along the nascent mRNA. The polypeptide is THO complex subunit MFT1 (MFT1) (Saccharomyces cerevisiae (strain ATCC 204508 / S288c) (Baker's yeast)).